Here is a 152-residue protein sequence, read N- to C-terminus: Transcriptional repressor NrdR (152 aa).

The segment at 3 to 34 (CPACQHNGTRVLDSRPVDEGRSIRRRRECESC) is a zinc-finger region. Residues 49–139 (LIVVKKEGIR…VYRQFKDINV (91 aa)) enclose the ATP-cone domain.

It belongs to the NrdR family. It depends on Zn(2+) as a cofactor.

In terms of biological role, negatively regulates transcription of bacterial ribonucleotide reductase nrd genes and operons by binding to NrdR-boxes. The chain is Transcriptional repressor NrdR from Bacillus licheniformis (strain ATCC 14580 / DSM 13 / JCM 2505 / CCUG 7422 / NBRC 12200 / NCIMB 9375 / NCTC 10341 / NRRL NRS-1264 / Gibson 46).